The following is a 111-amino-acid chain: uncharacterized protein (111 aa).

This is an uncharacterized protein from Escherichia coli (Bacteriophage T4).